The primary structure comprises 197 residues: Probable deoxycytidylate deaminase (197 aa).

A CMP/dCMP-type deaminase domain is found at 49 to 183 (KKHQRFLRIA…KMLDHARLPY (135 aa)). Residue H117 coordinates Zn(2+). The Proton donor role is filled by E119. Zn(2+) is bound by residues C143 and C146.

It belongs to the cytidine and deoxycytidylate deaminase family. Zn(2+) serves as cofactor.

It catalyses the reaction dCMP + H2O + H(+) = dUMP + NH4(+). Functionally, supplies the nucleotide substrate for thymidylate synthetase. This chain is Probable deoxycytidylate deaminase, found in Caenorhabditis elegans.